Here is a 221-residue protein sequence, read N- to C-terminus: Tetraspanin-2 (221 aa).

Over 1–13 (MGRFRGGLRCIKY) the chain is Cytoplasmic. A helical membrane pass occupies residues 14–34 (LLLGFNLLFWLAGSAVIAFGL). Residues 35–54 (WFRFGGAIKELSSEDKSPEY) are Extracellular-facing. A helical membrane pass occupies residues 55 to 75 (FYVGLYVLVGAGALMMAVGFF). Topologically, residues 76–90 (GCCGAMRESQCVLGS) are cytoplasmic. The chain crosses the membrane as a helical span at residues 91 to 111 (FFTCLLVIFAAEVTTGVFAFI). At 112–188 (GKGVAIRHVQ…ETIISVKLQL (77 aa)) the chain is on the extracellular side. N-linked (GlcNAc...) asparagine glycosylation is present at Asn-139. Residues 189-209 (IGIVGIGIAGLTIFGMIFSMV) traverse the membrane as a helical segment. Topologically, residues 210 to 221 (LCCAIRNSRDVI) are cytoplasmic.

This sequence belongs to the tetraspanin (TM4SF) family.

The protein localises to the membrane. In terms of biological role, may play a role in signalling in oligodendrocytes in the early stages of their terminal differentiation into myelin-forming glia and may also function in stabilizing the mature sheath. The polypeptide is Tetraspanin-2 (TSPAN2) (Homo sapiens (Human)).